Consider the following 497-residue polypeptide: UDP-N-acetylmuramoyl-L-alanyl-D-glutamate--2,6-diaminopimelate ligase (497 aa).

Serine 32 serves as a coordination point for UDP-N-acetyl-alpha-D-muramoyl-L-alanyl-D-glutamate. 113 to 119 contacts ATP; the sequence is GTNGKTT. Residues 155 to 156, serine 182, glutamine 188, and arginine 190 contribute to the UDP-N-acetyl-alpha-D-muramoyl-L-alanyl-D-glutamate site; that span reads TT. N6-carboxylysine is present on lysine 222. Meso-2,6-diaminopimelate contacts are provided by residues arginine 385, 409–412, glycine 460, and glutamate 464; that span reads DNPR. The Meso-diaminopimelate recognition motif signature appears at 409-412; that stretch reads DNPR.

The protein belongs to the MurCDEF family. MurE subfamily. It depends on Mg(2+) as a cofactor. Post-translationally, carboxylation is probably crucial for Mg(2+) binding and, consequently, for the gamma-phosphate positioning of ATP.

The protein resides in the cytoplasm. The enzyme catalyses UDP-N-acetyl-alpha-D-muramoyl-L-alanyl-D-glutamate + meso-2,6-diaminopimelate + ATP = UDP-N-acetyl-alpha-D-muramoyl-L-alanyl-gamma-D-glutamyl-meso-2,6-diaminopimelate + ADP + phosphate + H(+). It participates in cell wall biogenesis; peptidoglycan biosynthesis. Catalyzes the addition of meso-diaminopimelic acid to the nucleotide precursor UDP-N-acetylmuramoyl-L-alanyl-D-glutamate (UMAG) in the biosynthesis of bacterial cell-wall peptidoglycan. The sequence is that of UDP-N-acetylmuramoyl-L-alanyl-D-glutamate--2,6-diaminopimelate ligase from Thermosynechococcus vestitus (strain NIES-2133 / IAM M-273 / BP-1).